Consider the following 315-residue polypeptide: Protein phosphatase PTC7 homolog fig (315 aa).

Positions 54 to 309 (KHSIASAKDN…DDITVILATV (256 aa)) constitute a PPM-type phosphatase domain. Residues Asp86, Gly87, and Asp231 each coordinate Mn(2+).

Belongs to the PP2C family. It depends on Mg(2+) as a cofactor. Mn(2+) is required as a cofactor.

The enzyme catalyses O-phospho-L-seryl-[protein] + H2O = L-seryl-[protein] + phosphate. The catalysed reaction is O-phospho-L-threonyl-[protein] + H2O = L-threonyl-[protein] + phosphate. The chain is Protein phosphatase PTC7 homolog fig from Drosophila willistoni (Fruit fly).